Consider the following 1789-residue polypeptide: Protein sprint (1789 aa).

Disordered stretches follow at residues 53–120 (TTAN…AHPP), 140–190 (TTTA…DLAN), 218–237 (PLWNARNGNGSTTTHCHPTG), 261–317 (QRMH…QAGL), 329–378 (LNNN…DADD), and 401–460 (RRSR…PCDL). The span at 82-114 (SINNNKNNNISNKNNNNNNNNNNNINNNNNNNN) shows a compositional bias: low complexity. Residues 140 to 149 (TTTANQLQQQ) show a composition bias toward polar residues. Over residues 176-185 (PSEEDGDTDA) the composition is skewed to acidic residues. Residues 223-233 (RNGNGSTTTHC) are compositionally biased toward polar residues. Residues 295–317 (NNNNINNNHNGQQSQKSQQQAGL) show a composition bias toward low complexity. Over residues 337–361 (QPGSMTPASNRTGLDSNQNQKQNLN) the composition is skewed to polar residues. Residues 409–418 (QSRTSLVSSS) show a composition bias toward low complexity. Acidic residues predominate over residues 428 to 445 (TSSEDDEEEPVEAEDEGE). An SH2 domain is found at 473–566 (WFLPGIQRSG…ELPVQLMLPR (94 aa)). 7 disordered regions span residues 632–689 (FFSD…SGGQ), 744–787 (TAPE…SANG), 852–918 (GECK…ILES), 969–1006 (DLLAETPSTPTPTQQSHLTPCEEETTATPNESSSQSLL), 1040–1067 (AAEDDGGDTTPTAEGQANGASRSKQGSP), 1094–1123 (RSQMLHASQRHSEPLKAGFGGSGNGAMLQP), and 1138–1160 (PKPKVSQQQQQSQQQQQPTKRAR). Residues 639–649 (KPPPTGAPPLP) show a composition bias toward pro residues. Low complexity predominate over residues 671–686 (TPSDTTNSSLSSFTTS). Residues 857-868 (TLSSQGSSSNDS) are compositionally biased toward polar residues. Positions 903–914 (AGKESQHYKESD) are enriched in basic and acidic residues. Positions 974–984 (TPSTPTPTQQS) are enriched in low complexity. Composition is skewed to polar residues over residues 994 to 1006 (TATPNESSSQSLL) and 1048 to 1065 (TTPTAEGQANGASRSKQG). Over residues 1143 to 1154 (SQQQQQSQQQQQ) the composition is skewed to low complexity. A VPS9 domain is found at 1531 to 1673 (RSEDIQLLAQ…LKTFMASEGE (143 aa)). Residues 1689-1777 (CSSVLRVIIP…CMLAYKRIDA (89 aa)) enclose the Ras-associating domain.

The protein belongs to the RIN (Ras interaction/interference) family. As to expression, in late cellular blastoderm embryos, it is expressed in the posterior end. Then, as development proceeds, it is expressed in the developing midgut, amnioserosa and in a specific subset of CNS neurons. Isoform 1 is expressed earlier in developing midgut and amnioserosa, but is not expressed in the CNS.

Potential Ras effector protein. May function as a guanine nucleotide exchange (GEF), by exchanging bound GDP for free GTP. This Drosophila melanogaster (Fruit fly) protein is Protein sprint (spri).